Here is a 350-residue protein sequence, read N- to C-terminus: DNA primase small subunit PriS (350 aa).

Residues Asp97, Asp99, and Asp251 contribute to the active site.

This sequence belongs to the eukaryotic-type primase small subunit family. In terms of assembly, heterodimer of a small subunit (PriS) and a large subunit (PriL). Requires Mg(2+) as cofactor. Mn(2+) serves as cofactor. The cofactor is Zn(2+).

In terms of biological role, catalytic subunit of DNA primase, an RNA polymerase that catalyzes the synthesis of short RNA molecules used as primers for DNA polymerase during DNA replication. The small subunit contains the primase catalytic core and has DNA synthesis activity on its own. Binding to the large subunit stabilizes and modulates the activity, increasing the rate of DNA synthesis while decreasing the length of the DNA fragments, and conferring RNA synthesis capability. The DNA polymerase activity may enable DNA primase to also catalyze primer extension after primer synthesis. May also play a role in DNA repair. In Methanocaldococcus jannaschii (strain ATCC 43067 / DSM 2661 / JAL-1 / JCM 10045 / NBRC 100440) (Methanococcus jannaschii), this protein is DNA primase small subunit PriS.